A 378-amino-acid polypeptide reads, in one-letter code: Pulmonary surfactant-associated protein D (378 aa).

The signal sequence occupies residues 1 to 20; it reads MLLLPLSVLILLTQPPRSLG. Residues Cys35 and Cys40 each carry the S-nitrosocysteine modification. The interval 43–221 is disordered; sequence MENGLPGRDG…ERGAKGESGL (179 aa). Positions 46-222 constitute a Collagen-like domain; that stretch reads GLPGRDGRDG…RGAKGESGLP (177 aa). Residues 50-65 are compositionally biased toward basic and acidic residues; it reads RDGRDGREGPRGEKGD. The residue at position 78 (Pro78) is a 4-hydroxyproline. A 5-hydroxylysine modification is found at Lys87. Asn90 carries N-linked (GlcNAc...) asparagine glycosylation. Pro96 is modified (4-hydroxyproline). At Lys99 the chain carries 5-hydroxylysine. Positions 105–114 are enriched in pro residues; sequence CGPPGPPGIP. Residues 137–146 are compositionally biased toward low complexity; the sequence is PKGETGPKGE. Residues Pro171 and Pro177 each carry the 4-hydroxyproline modification. The span at 173–197 shows a compositional bias: low complexity; the sequence is ERGAPGSAGAAGPAGATGPQGPSGA. Residues 204–216 are compositionally biased toward basic and acidic residues; that stretch reads KGDRGPPGERGAK. Residues 223–254 are a coiled coil; the sequence is GITALRQQVETLQGQVQRLQKAFSQYKKVELF. Positions 260 to 378 constitute a C-type lectin domain; that stretch reads VGEKIFKTGG…GELRLVICEF (119 aa). Intrachain disulfides connect Cys281-Cys376 and Cys354-Cys368. N-linked (GlcNAc...) asparagine glycosylation is present at Asn323.

Belongs to the SFTPD family. In terms of assembly, oligomeric complex of 4 set of homotrimers. Hydroxylation on proline residues within the sequence motif, GXPG, is most likely to be 4-hydroxy as this fits the requirement for 4-hydroxylation in vertebrates. Post-translationally, S-nitrosylation at Cys-35 and Cys-40 alters the quaternary structure which results in a pro-inflammatory chemoattractive signaling activity with macrophages.

It localises to the secreted. Its subcellular location is the extracellular space. The protein localises to the extracellular matrix. The protein resides in the surface film. Functionally, contributes to the lung's defense against inhaled microorganisms, organic antigens and toxins. Interacts with compounds such as bacterial lipopolysaccharides, oligosaccharides and fatty acids and modulates leukocyte action in immune response. May participate in the extracellular reorganization or turnover of pulmonary surfactant. Binds strongly maltose residues and to a lesser extent other alpha-glucosyl moieties. The polypeptide is Pulmonary surfactant-associated protein D (SFTPD) (Sus scrofa (Pig)).